We begin with the raw amino-acid sequence, 146 residues long: Large ribosomal subunit protein uL15 (146 aa).

A disordered region spans residues 1 to 59 (MRLEELKAPAGANKRTKRVGRGTGSGHGKTSTRGHKGQKSRSGGGVRPGFEGGQMPLQR). Residues 30–39 (TSTRGHKGQK) are compositionally biased toward basic residues. Residues 42–52 (SGGGVRPGFEG) show a composition bias toward gly residues.

Belongs to the universal ribosomal protein uL15 family. As to quaternary structure, part of the 50S ribosomal subunit.

In terms of biological role, binds to the 23S rRNA. The sequence is that of Large ribosomal subunit protein uL15 from Syntrophomonas wolfei subsp. wolfei (strain DSM 2245B / Goettingen).